The primary structure comprises 473 residues: H(+)/Cl(-) exchange transporter ClcA (473 aa).

Residues 1-32 (MKTDTSTFLAQQIVRLRRRDQIRRLMQRDKTP) lie on the Cytoplasmic side of the membrane. Residues 33–69 (LAILFMAAVVGTLTGLVGVAFEKTVSWVQNMRIGALV) form a helical membrane-spanning segment. Over 70–76 (QVADHAF) the chain is Periplasmic. A helical transmembrane segment spans residues 77 to 100 (LLWPLAFILSALLAMVGYFLVRKF). Residues 106 to 110 (GSGIP) carry the Selectivity filter part_1 motif. S107 provides a ligand contact to chloride. Residues 109–116 (IPEIEGAL) constitute an intramembrane region (helical). Residues 117 to 123 (EELRPVR) are Cytoplasmic-facing. Transmembrane regions (helical) follow at residues 124–141 (WWRVLPVKFIGGMGTLGA) and 148–166 (EGPTVQIGGNLGRMVLDVF). The short motif at 146 to 150 (GREGP) is the Selectivity filter part_2 element. Over 167–176 (RMRSAEARHT) the chain is Cytoplasmic. 2 intramembrane regions (helical) span residues 177-189 (LLATGAAAGLSAA) and 193-201 (PLAGILFII). The Cytoplasmic segment spans residues 202 to 214 (EEMRPQFRYNLIS). The helical transmembrane segment at 215 to 232 (IKAVFTGVIMSSIVFRIF) threads the bilayer. Residues 233–252 (NGEAPIIEVGKLSDAPVNTL) lie on the Periplasmic side of the membrane. The helical transmembrane segment at 253–281 (WLYLILGIIFGCVGPVFNSLVLRTQDMFQ) threads the bilayer. Over 282-287 (RFHGGE) the chain is Cytoplasmic. A helical transmembrane segment spans residues 288-309 (IKKWVLMGGAIGGLCGILGLIE). The Periplasmic portion of the chain corresponds to 310-329 (PAAAGGGFNLIPIAAAGNFS). The next 2 helical transmembrane spans lie at 330-349 (VGLLLFIFITRVVTTLLCFS) and 355-376 (GIFAPMLALGTLLGTAFGMAAA). The Selectivity filter part_3 signature appears at 355 to 359 (GIFAP). Chloride contacts are provided by I356 and F357. Residues 377–386 (VLFPQYHPEA) are Periplasmic-facing. The helical intramembrane region spans 387-401 (GTFAIAGMGALMAAS). Residues 402-404 (VRA) constitute an intramembrane region (note=Loop between two helices). Residues 405 to 416 (PLTGIVLVLEMT) constitute an intramembrane region (helical). An intramembrane region (note=Loop between two helices) is located at residues 417 to 421 (DNYQL). Residues 422–438 (ILPMIITCLGATLLAQF) traverse the membrane as a helical segment. Residues 439–473 (LGGKPLYSTILARTLAKQDAEQAAKNQNAPAGENT) are Cytoplasmic-facing. Y445 serves as a coordination point for chloride.

Belongs to the chloride channel (TC 2.A.49) family. ClcA subfamily. Homodimer.

Its subcellular location is the cell inner membrane. The enzyme catalyses 2 chloride(in) + H(+)(out) = 2 chloride(out) + H(+)(in). Proton-coupled chloride transporter. Functions as antiport system and exchanges two chloride ions for 1 proton. Probably acts as an electrical shunt for an outwardly-directed proton pump that is linked to amino acid decarboxylation, as part of the extreme acid resistance (XAR) response. The chain is H(+)/Cl(-) exchange transporter ClcA from Salmonella paratyphi A (strain AKU_12601).